Reading from the N-terminus, the 107-residue chain is Large ribosomal subunit protein uL24 (107 aa).

It belongs to the universal ribosomal protein uL24 family. Part of the 50S ribosomal subunit.

Functionally, one of two assembly initiator proteins, it binds directly to the 5'-end of the 23S rRNA, where it nucleates assembly of the 50S subunit. Its function is as follows. One of the proteins that surrounds the polypeptide exit tunnel on the outside of the subunit. This is Large ribosomal subunit protein uL24 from Nitratidesulfovibrio vulgaris (strain DSM 19637 / Miyazaki F) (Desulfovibrio vulgaris).